We begin with the raw amino-acid sequence, 136 residues long: Pilotin AspS 2 (136 aa).

A signal peptide spans 1–24 (MSIKQMPGRVLISLLLSVTGLLSG). The N-palmitoyl cysteine moiety is linked to residue Cys-25. A lipid anchor (S-diacylglycerol cysteine) is attached at Cys-25. Cys-94 and Cys-131 form a disulfide bridge.

The protein belongs to the GspS/AspS pilotin family. As to quaternary structure, cryo-electron microscopy shows that the complex forms a cylindrical channel with 15 GspD2 subunits, each of which interacts with its surrounding AspS2 (GspS-beta).

The protein resides in the cell outer membrane. Its function is as follows. Part of a type II secretion system (T2SS, formerly general secretion pathway, GSP) for the export of folded proteins across the outer membrane. Required for correct assembly of the type II secretion system-beta (T2SS-beta), for localization of GspD-beta to the cell outer membrane and for export of a labile enterotoxin by T2SS-beta. Each AspS2 binds to 2 GspD2 subunits and may clamp the monomers together, stabilizing structure and accelerating its assembly. The protein is Pilotin AspS 2 of Escherichia coli O78:H11 (strain H10407 / ETEC).